Consider the following 269-residue polypeptide: Octanoyltransferase LipM (269 aa).

Residues 31 to 239 form the BPL/LPL catalytic domain; that stretch reads NHGAPVLRFY…GFSEGFEVNF (209 aa). The active-site Acyl-thioester intermediate is Cys141.

Belongs to the octanoyltransferase LipM family. Monomer.

It carries out the reaction octanoyl-[ACP] + L-lysyl-[protein] = N(6)-octanoyl-L-lysyl-[protein] + holo-[ACP] + H(+). The protein operates within protein modification; protein lipoylation via endogenous pathway; protein N(6)-(lipoyl)lysine from octanoyl-[acyl-carrier-protein]. Catalyzes the transfer of endogenously produced octanoic acid from octanoyl-acyl-carrier-protein onto the lipoyl domain of GcvH, an intermediate carrier during protein lipoylation. The polypeptide is Octanoyltransferase LipM (Carboxydothermus hydrogenoformans (strain ATCC BAA-161 / DSM 6008 / Z-2901)).